Reading from the N-terminus, the 101-residue chain is NADH-quinone oxidoreductase subunit K (101 aa).

The next 3 helical transmembrane spans lie at Leu5–Leu25, Leu29–Gly49, and Val62–Val82.

The protein belongs to the complex I subunit 4L family. As to quaternary structure, NDH-1 is composed of 14 different subunits. Subunits NuoA, H, J, K, L, M, N constitute the membrane sector of the complex.

It localises to the cell inner membrane. It carries out the reaction a quinone + NADH + 5 H(+)(in) = a quinol + NAD(+) + 4 H(+)(out). In terms of biological role, NDH-1 shuttles electrons from NADH, via FMN and iron-sulfur (Fe-S) centers, to quinones in the respiratory chain. The immediate electron acceptor for the enzyme in this species is believed to be ubiquinone. Couples the redox reaction to proton translocation (for every two electrons transferred, four hydrogen ions are translocated across the cytoplasmic membrane), and thus conserves the redox energy in a proton gradient. In Syntrophotalea carbinolica (strain DSM 2380 / NBRC 103641 / GraBd1) (Pelobacter carbinolicus), this protein is NADH-quinone oxidoreductase subunit K.